A 367-amino-acid chain; its full sequence is Glutamate 5-kinase (367 aa).

Lys-9 is a binding site for ATP. Residues Ser-49, Asp-136, and Asn-148 each coordinate substrate. ATP-binding positions include 168 to 169 (TD) and 210 to 216 (TGGMKSK). One can recognise a PUA domain in the interval 276–350 (SGQIEVDAGA…GMQSQDIQVR (75 aa)).

This sequence belongs to the glutamate 5-kinase family.

The protein localises to the cytoplasm. It catalyses the reaction L-glutamate + ATP = L-glutamyl 5-phosphate + ADP. It participates in amino-acid biosynthesis; L-proline biosynthesis; L-glutamate 5-semialdehyde from L-glutamate: step 1/2. In terms of biological role, catalyzes the transfer of a phosphate group to glutamate to form L-glutamate 5-phosphate. In Bacillus cereus (strain B4264), this protein is Glutamate 5-kinase.